Consider the following 316-residue polypeptide: tRNA dimethylallyltransferase (316 aa).

Residue 17-24 (GPTASGKT) participates in ATP binding. Substrate is bound at residue 19 to 24 (TASGKT). 4 interaction with substrate tRNA regions span residues 42 to 45 (DSAL), 166 to 170 (QRLSR), 247 to 252 (RCVGYR), and 280 to 287 (KRQITWLR).

It belongs to the IPP transferase family. Monomer. Requires Mg(2+) as cofactor.

The enzyme catalyses adenosine(37) in tRNA + dimethylallyl diphosphate = N(6)-dimethylallyladenosine(37) in tRNA + diphosphate. Its function is as follows. Catalyzes the transfer of a dimethylallyl group onto the adenine at position 37 in tRNAs that read codons beginning with uridine, leading to the formation of N6-(dimethylallyl)adenosine (i(6)A). The polypeptide is tRNA dimethylallyltransferase (Shigella dysenteriae serotype 1 (strain Sd197)).